The primary structure comprises 316 residues: Protein lifeguard 2 (316 aa).

The segment at 1–46 is disordered; it reads MTQGKLSVANKAPGTEGQQQANGEKKETPAVPSAPPSYEEATSGEG. 3 consecutive transmembrane segments (helical) span residues 106–126, 138–158, and 165–185; these read VYTI…LFTF, PGWY…LACC, and FPWN…LTGM. N-linked (GlcNAc...) asparagine glycosylation occurs at Asn-191. 4 helical membrane-spanning segments follow: residues 194 to 214, 225 to 245, 251 to 271, and 290 to 310; these read SVLL…VFSF, GVLF…AILL, PWLH…FLAF, and IFGA…FLQL.

This sequence belongs to the BI1 family. LFG subfamily. In terms of assembly, interacts with FAS/TNFRSF6 and BAX.

It localises to the cell membrane. The protein localises to the membrane raft. Its subcellular location is the postsynaptic cell membrane. Its function is as follows. Antiapoptotic protein which protects cells uniquely from Fas-induced apoptosis. Regulates Fas-mediated apoptosis in neurons by interfering with caspase-8 activation. Plays a role in cerebellar development by affecting cerebellar size, internal granular layer (IGL) thickness, and Purkinje cell (PC) development. In Bos taurus (Bovine), this protein is Protein lifeguard 2 (FAIM2).